The primary structure comprises 185 residues: Neuronal vesicle trafficking-associated protein 1 (185 aa).

The Cytoplasmic portion of the chain corresponds to 1–82 (MVKLGNNFAE…ITEGVTERFK (82 aa)). A helical; Signal-anchor for type II membrane protein membrane pass occupies residues 83–103 (VSVLVLFALAFLTCVVFLVVY). Residues 104 to 185 (KVYKYDRACP…QETEAAEKSA (82 aa)) lie on the Lumenal side of the membrane. Residues 129 to 164 (ESYYAEQDSSAREKFYTVINHYNLAKQSITRSVSPW) form a required for GRIP1 interaction region.

It belongs to the NSG family. Forms a complex with GRIP1, GRIA2 and STX12 through direct interaction with GRIP1; controls the intracellular fate of AMPAR and the endosomal sorting of the GRIA2 subunit toward recycling and membrane targeting. Interacts with STX12. Interacts with APP; could regulate APP processing. Interacts with FAM171A1.

The protein localises to the membrane. It localises to the golgi apparatus. The protein resides in the trans-Golgi network membrane. Its subcellular location is the endosome membrane. It is found in the cell projection. The protein localises to the dendrite. It localises to the early endosome membrane. The protein resides in the late endosome membrane. Its subcellular location is the lysosome lumen. It is found in the recycling endosome membrane. The protein localises to the cytoplasmic vesicle membrane. It localises to the golgi stack membrane. The protein resides in the endosome. Its subcellular location is the multivesicular body membrane. It is found in the endoplasmic reticulum membrane. Plays a role in the recycling mechanism in neurons of multiple receptors, including AMPAR, APP and L1CAM and acts at the level of early endosomes to promote sorting of receptors toward a recycling pathway. Regulates sorting and recycling of GRIA2 through interaction with GRIP1 and then contributes to the regulation of synaptic transmission and plasticity by affecting the recycling and targeting of AMPA receptors to the synapse. Is required for faithful sorting of L1CAM to axons by facilitating trafficking from somatodendritic early endosome or the recycling endosome. In an other hand, induces apoptosis via the activation of CASP3 in response to DNA damage. The chain is Neuronal vesicle trafficking-associated protein 1 from Macaca fascicularis (Crab-eating macaque).